We begin with the raw amino-acid sequence, 170 residues long: Zinc finger A20 and AN1 domain-containing stress-associated protein 6 (170 aa).

Residues 10-44 (PESNRLCVNNCGFLGSSATMNLCSNCYGDLCLKQQ) form an A20-type zinc finger. The Zn(2+) site is built by C16, C20, C32, and C35. The segment at 53–76 (TVESSLSVSPPSSSSSEISSPIIP) is disordered. The AN1-type zinc finger occupies 105–151 (QQRPNRCTTCRKRVGLTGFKCRCGTMFCGVHRYPEIHGCSYDFKSAG). Zn(2+)-binding residues include C111, C114, C125, C127, C132, H135, H141, and C143.

May be involved in environmental stress response. The sequence is that of Zinc finger A20 and AN1 domain-containing stress-associated protein 6 (SAP6) from Arabidopsis thaliana (Mouse-ear cress).